A 272-amino-acid polypeptide reads, in one-letter code: Tryptophan synthase alpha chain (272 aa).

Residues E49 and E60 each act as proton acceptor in the active site.

It belongs to the TrpA family. In terms of assembly, tetramer of two alpha and two beta chains.

The catalysed reaction is (1S,2R)-1-C-(indol-3-yl)glycerol 3-phosphate + L-serine = D-glyceraldehyde 3-phosphate + L-tryptophan + H2O. The protein operates within amino-acid biosynthesis; L-tryptophan biosynthesis; L-tryptophan from chorismate: step 5/5. Functionally, the alpha subunit is responsible for the aldol cleavage of indoleglycerol phosphate to indole and glyceraldehyde 3-phosphate. This chain is Tryptophan synthase alpha chain, found in Legionella pneumophila (strain Paris).